Consider the following 77-residue polypeptide: MDLVKNHLMYAVREEVEILKEQIRELVEKNSQLERENTLLKTLASPEQLEKFQSRLSPEEPAPETPEAPEAPGGSAV.

Met1 bears the N-acetylmethionine mark. The segment at 19–40 (LKEQIRELVEKNSQLERENTLL) is leucine-zipper. The tract at residues 41 to 77 (KTLASPEQLEKFQSRLSPEEPAPETPEAPEAPGGSAV) is disordered. At Ser45 the chain carries Phosphoserine. Residues 68–77 (APEAPGGSAV) show a composition bias toward low complexity.

It belongs to the TSC-22/Dip/Bun family. Can form homodimers, however it is likely to function as a monomer. Interacts with AP1 and NFKB1. Interacts with MYOD1. Interacts with HDAC1; this interaction affects HDAC1 activity on MYOG promoter and thus inhibits MYOD1 transcriptional activity.

It is found in the cytoplasm. Its subcellular location is the nucleus. Protects T-cells from IL2 deprivation-induced apoptosis through the inhibition of FOXO3A transcriptional activity that leads to the down-regulation of the pro-apoptotic factor BCL2L11. In macrophages, plays a role in the anti-inflammatory and immunosuppressive effects of glucocorticoids and IL10. In T-cells, inhibits anti-CD3-induced NFKB1 nuclear translocation. In vitro, suppresses AP1 and NFKB1 DNA-binding activities. Inhibits myogenic differentiation and mediates anti-myogenic effects of glucocorticoids by binding and regulating MYOD1 and HDAC1 transcriptional activity resulting in reduced expression of MYOG. The polypeptide is TSC22 domain family protein 3 (TSC22D3) (Sus scrofa (Pig)).